Reading from the N-terminus, the 153-residue chain is Ribonuclease H (153 aa).

An RNase H type-1 domain is found at 4-146 (NNEIVEIYTD…CDRLATEQIK (143 aa)). Mg(2+) contacts are provided by Asp13, Glu51, Asp73, and Asp138.

It belongs to the RNase H family. As to quaternary structure, monomer. Mg(2+) serves as cofactor.

It localises to the cytoplasm. The enzyme catalyses Endonucleolytic cleavage to 5'-phosphomonoester.. Endonuclease that specifically degrades the RNA of RNA-DNA hybrids. The sequence is that of Ribonuclease H from Caldanaerobacter subterraneus subsp. tengcongensis (strain DSM 15242 / JCM 11007 / NBRC 100824 / MB4) (Thermoanaerobacter tengcongensis).